The sequence spans 258 residues: Ribosomal RNA large subunit methyltransferase E (258 aa).

S-adenosyl-L-methionine-binding residues include glycine 58, tryptophan 60, aspartate 78, aspartate 96, and aspartate 120. Catalysis depends on lysine 160, which acts as the Proton acceptor.

Belongs to the class I-like SAM-binding methyltransferase superfamily. RNA methyltransferase RlmE family.

Its subcellular location is the cytoplasm. The enzyme catalyses uridine(2552) in 23S rRNA + S-adenosyl-L-methionine = 2'-O-methyluridine(2552) in 23S rRNA + S-adenosyl-L-homocysteine + H(+). In terms of biological role, specifically methylates the uridine in position 2552 of 23S rRNA at the 2'-O position of the ribose in the fully assembled 50S ribosomal subunit. In Methanococcus maripaludis (strain C7 / ATCC BAA-1331), this protein is Ribosomal RNA large subunit methyltransferase E.